The following is a 700-amino-acid chain: Elongation factor G (700 aa).

The region spanning 8 to 290 (SLYRNIGISA…AVIDYLPAPT (283 aa)) is the tr-type G domain. GTP is bound by residues 17–24 (AHIDAGKT), 88–92 (DTPGH), and 142–145 (NKMD).

The protein belongs to the TRAFAC class translation factor GTPase superfamily. Classic translation factor GTPase family. EF-G/EF-2 subfamily.

The protein resides in the cytoplasm. Functionally, catalyzes the GTP-dependent ribosomal translocation step during translation elongation. During this step, the ribosome changes from the pre-translocational (PRE) to the post-translocational (POST) state as the newly formed A-site-bound peptidyl-tRNA and P-site-bound deacylated tRNA move to the P and E sites, respectively. Catalyzes the coordinated movement of the two tRNA molecules, the mRNA and conformational changes in the ribosome. In Histophilus somni (strain 129Pt) (Haemophilus somnus), this protein is Elongation factor G.